Reading from the N-terminus, the 202-residue chain is Probable nicotinate-nucleotide adenylyltransferase (202 aa).

The protein belongs to the NadD family.

It carries out the reaction nicotinate beta-D-ribonucleotide + ATP + H(+) = deamido-NAD(+) + diphosphate. It functions in the pathway cofactor biosynthesis; NAD(+) biosynthesis; deamido-NAD(+) from nicotinate D-ribonucleotide: step 1/1. In terms of biological role, catalyzes the reversible adenylation of nicotinate mononucleotide (NaMN) to nicotinic acid adenine dinucleotide (NaAD). The chain is Probable nicotinate-nucleotide adenylyltransferase from Bacteroides thetaiotaomicron (strain ATCC 29148 / DSM 2079 / JCM 5827 / CCUG 10774 / NCTC 10582 / VPI-5482 / E50).